Here is a 144-residue protein sequence, read N- to C-terminus: Transcriptional regulator SlyA (144 aa).

An HTH marR-type domain is found at 2-135 (ESPLGSDLAR…LIKLIAKLEH (134 aa)). The segment at residues 49–72 (QIQLAKAIGIEQPSLVRTLDQLEE) is a DNA-binding region (H-T-H motif).

The protein belongs to the SlyA family. As to quaternary structure, homodimer.

Functionally, transcription regulator that can specifically activate or repress expression of target genes. The protein is Transcriptional regulator SlyA of Escherichia coli O127:H6 (strain E2348/69 / EPEC).